A 934-amino-acid polypeptide reads, in one-letter code: Protein translocase subunit SecA (934 aa).

ATP contacts are provided by residues Gln87, Gly105–Thr109, and Asp515. Zn(2+) is bound by residues Cys918, Cys920, Cys929, and His930.

This sequence belongs to the SecA family. As to quaternary structure, monomer and homodimer. Part of the essential Sec protein translocation apparatus which comprises SecA, SecYEG and auxiliary proteins SecDF-YajC and YidC. It depends on Zn(2+) as a cofactor.

It localises to the cell inner membrane. Its subcellular location is the cytoplasm. It carries out the reaction ATP + H2O + cellular proteinSide 1 = ADP + phosphate + cellular proteinSide 2.. In terms of biological role, part of the Sec protein translocase complex. Interacts with the SecYEG preprotein conducting channel. Has a central role in coupling the hydrolysis of ATP to the transfer of proteins into and across the cell membrane, serving both as a receptor for the preprotein-SecB complex and as an ATP-driven molecular motor driving the stepwise translocation of polypeptide chains across the membrane. This Ralstonia nicotianae (strain ATCC BAA-1114 / GMI1000) (Ralstonia solanacearum) protein is Protein translocase subunit SecA.